Reading from the N-terminus, the 211-residue chain is Redox-sensing transcriptional repressor Rex (211 aa).

Residues 16-55 constitute a DNA-binding region (H-T-H motif); that stretch reads LYYRYLLILNEEGKDKVSSTELSEAVQVDSASIRRDFSYF. 90 to 95 contributes to the NAD(+) binding site; the sequence is GVGNLG.

Belongs to the transcriptional regulatory Rex family. Homodimer.

The protein resides in the cytoplasm. Modulates transcription in response to changes in cellular NADH/NAD(+) redox state. The protein is Redox-sensing transcriptional repressor Rex of Lactobacillus acidophilus (strain ATCC 700396 / NCK56 / N2 / NCFM).